A 444-amino-acid polypeptide reads, in one-letter code: Viral protein kinase (444 aa).

Residues 1–25 (MRWKRMERRPPLTPLRRSRTQSSGG) are disordered. Residues 90–98 (LGRGAFGII) and Lys108 contribute to the ATP site. Asp201 functions as the Proton acceptor in the catalytic mechanism.

Interacts with protein K-bZIP/K8. Interacts with host beta-catenin/CTNNB1. Post-translationally, AUtophosphorylated.

It localises to the host nucleus. The enzyme catalyses L-seryl-[protein] + ATP = O-phospho-L-seryl-[protein] + ADP + H(+). It carries out the reaction L-threonyl-[protein] + ATP = O-phospho-L-threonyl-[protein] + ADP + H(+). Its function is as follows. Serine/threonine protein kinase that plays a role in viral gene expression, viral DNA replication and encapsidation, and nuclear egress of virions. Regulates host transcriptional activity through interactions with RNA helicase and c-Jun N-terminal kinase (JNK) and viral transcriptional activity through interactions with the viral protein K-bZIP/K8. Induces host chromosome condensation and phosphorylation of histone H3. Phosphorylates the DNA polymerase processivity factor hence modulating its processivity function. Inhibits the host Wnt signaling pathway via direct interactions with beta-catenin/CTNNB1 while the kinase activity of vPK is not required for this inhibitory activity. Also phosphorylates host SAMHD1 and thereby counteracts its antiviral effect by reducing its dNTP hydrolase activity. This is Viral protein kinase (vPK) from Human herpesvirus 8 type P (isolate GK18) (HHV-8).